Here is a 130-residue protein sequence, read N- to C-terminus: Transcription antitermination protein NusB (130 aa).

This sequence belongs to the NusB family.

Its function is as follows. Involved in transcription antitermination. Required for transcription of ribosomal RNA (rRNA) genes. Binds specifically to the boxA antiterminator sequence of the ribosomal RNA (rrn) operons. The protein is Transcription antitermination protein NusB of Bacillus velezensis (strain DSM 23117 / BGSC 10A6 / LMG 26770 / FZB42) (Bacillus amyloliquefaciens subsp. plantarum).